Here is a 324-residue protein sequence, read N- to C-terminus: Glyoxylate/hydroxypyruvate reductase B (324 aa).

Catalysis depends on residues Arg237 and Glu266. The active-site Proton donor is the His285.

The protein belongs to the D-isomer specific 2-hydroxyacid dehydrogenase family. GhrB subfamily. In terms of assembly, homodimer.

The protein resides in the cytoplasm. The enzyme catalyses glycolate + NADP(+) = glyoxylate + NADPH + H(+). The catalysed reaction is (R)-glycerate + NAD(+) = 3-hydroxypyruvate + NADH + H(+). It catalyses the reaction (R)-glycerate + NADP(+) = 3-hydroxypyruvate + NADPH + H(+). Its function is as follows. Catalyzes the NADPH-dependent reduction of glyoxylate and hydroxypyruvate into glycolate and glycerate, respectively. In Escherichia coli (strain SMS-3-5 / SECEC), this protein is Glyoxylate/hydroxypyruvate reductase B.